Reading from the N-terminus, the 597-residue chain is Lysine--tRNA ligase (597 aa).

Mg(2+) contacts are provided by E501 and E508.

Belongs to the class-II aminoacyl-tRNA synthetase family. Homodimer. Mg(2+) is required as a cofactor.

Its subcellular location is the cytoplasm. It catalyses the reaction tRNA(Lys) + L-lysine + ATP = L-lysyl-tRNA(Lys) + AMP + diphosphate. The chain is Lysine--tRNA ligase (lysS) from Aquifex aeolicus (strain VF5).